Here is a 143-residue protein sequence, read N- to C-terminus: Small ribosomal subunit protein eS19x (143 aa).

This sequence belongs to the eukaryotic ribosomal protein eS19 family.

The chain is Small ribosomal subunit protein eS19x (RPS19C) from Arabidopsis thaliana (Mouse-ear cress).